The following is a 366-amino-acid chain: Nodulation protein NolL (366 aa).

The next 9 membrane-spanning stretches (helical) occupy residues 27–47 (FVKGILIILVVLGHLLQLVIY), 62–82 (IYMFHMPLFMAISGYLASGTI), 98–118 (LLIPMLFWCALIETAKLAAFF), 140–160 (FLWAVLASFLLTKLFAAFNLL), 164–184 (ILCASAIVIALMPITLSIVPL), 212–232 (HKSLLMFSCWAVACLCFLDWG), 253–273 (VLLMFTGSAAAAAVAAQSLFH), 286–306 (LVAVELGQSTLLLYLVQGAVF), and 324–344 (IVVASAIGAAIFGAATAVLWI).

Belongs to the acyltransferase 3 family.

The protein localises to the cell membrane. In terms of biological role, thought to be an acetyltransferase that modifies the fucose of the nod factor. This chain is Nodulation protein NolL (nolL), found in Sinorhizobium fredii (strain NBRC 101917 / NGR234).